A 119-amino-acid polypeptide reads, in one-letter code: Ribonuclease P protein component (119 aa).

It belongs to the RnpA family. In terms of assembly, consists of a catalytic RNA component (M1 or rnpB) and a protein subunit.

The catalysed reaction is Endonucleolytic cleavage of RNA, removing 5'-extranucleotides from tRNA precursor.. Functionally, RNaseP catalyzes the removal of the 5'-leader sequence from pre-tRNA to produce the mature 5'-terminus. It can also cleave other RNA substrates such as 4.5S RNA. The protein component plays an auxiliary but essential role in vivo by binding to the 5'-leader sequence and broadening the substrate specificity of the ribozyme. The sequence is that of Ribonuclease P protein component from Aeromonas hydrophila subsp. hydrophila (strain ATCC 7966 / DSM 30187 / BCRC 13018 / CCUG 14551 / JCM 1027 / KCTC 2358 / NCIMB 9240 / NCTC 8049).